Consider the following 843-residue polypeptide: MLQSEKEFDYINIKLASPLRILQWSYRRLPNGQFIGEVQKSETINYRTFKPEMDGLFCERIFGPSRSFECACGKYKLIRYEGLICERCGVELTESRVRRHRMGHINLIYPVAHVWYTNSRPNYMALLLEVEQCEKNLNTSWQILRFSLPGIYDQVLRPILLSDHWPDSSIDEYLKTICKDFSTIALESSNIWAKKSKAWYQKIFEIYQELLYAKIETIYQFIEFIDNIDLTKQPTSVNFIFDYLENEKILDLMNPISLTNEITASQDPAQIDLVDPSRDIFLFLNTFPKKQHKELFRKLIRKSNTVKSLDDRIKRIKLASLAYFIAEDEISYYGLHWDLQQYRRSRELGFTAYPLKPEPKPKLQNRRYNTPKYLLRMTPTYLIGAVLIKKELEDLDIIKEIQRTRKFIVICSKILHKEKPIYHFLRWFRKWELQRAYKLRDQAIKRIRILENLLATGSNPAWMILTILPVIPPALRPMIQLEGGRFATSDLNELYRRIITRNNRLLRLLEIDAPQLIIRNEKRMLQEAVDTLIDNGKRGKIALSANNRPLKSLSDIIKGKHGRFRQNLLGKRVDYSGRSVIVVGPSLRLNECGLPYEMALELFQPFLIREMINQGLASNMKIARNLIEQNEAIIDPVLEKVLSNHPIFLNRAPTLHRLGIQAFEPILVQGRAIKLHPLVCSAFNADFDGDQMAVHIPLSLESQSECYMLMLAPYNFLSPANGEPIILPSQDMVLGCYYLTVSNIKGLLGSNQYFASLEDVLLAYNQDKIELHTAIWIRYTDNYIEPLNFKKQIQLNDASYIEIYENMQIRRDKDGNKIVQYLQTTTGRVIFNYTVQTTLNLLS.

Residues cysteine 70, cysteine 72, cysteine 85, and cysteine 88 each coordinate Zn(2+). Aspartate 686, aspartate 688, and aspartate 690 together coordinate Mg(2+).

Belongs to the RNA polymerase beta' chain family. RpoC1 subfamily. As to quaternary structure, in plastids the minimal PEP RNA polymerase catalytic core is composed of four subunits: alpha, beta, beta', and beta''. When a (nuclear-encoded) sigma factor is associated with the core the holoenzyme is formed, which can initiate transcription. Mg(2+) is required as a cofactor. Zn(2+) serves as cofactor.

It localises to the plastid. The protein localises to the chloroplast. The enzyme catalyses RNA(n) + a ribonucleoside 5'-triphosphate = RNA(n+1) + diphosphate. DNA-dependent RNA polymerase catalyzes the transcription of DNA into RNA using the four ribonucleoside triphosphates as substrates. This is DNA-directed RNA polymerase subunit beta' from Trieres chinensis (Marine centric diatom).